The following is a 186-amino-acid chain: Auxin-responsive protein IAA4 (186 aa).

The EAR-like (transcriptional repression) signature appears at 18–22 (LRLGL). A disordered region spans residues 25–62 (TEETVSCGKSNKRVLPEATEKEIESTGKTETASPPKAQ). Positions 38–51 (VLPEATEKEIESTG) are enriched in basic and acidic residues. In terms of domain architecture, PB1 spans 88–175 (GNYVKVSMDG…SCKRLRIMKG (88 aa)).

It belongs to the Aux/IAA family. Homodimers and heterodimers. Interacts with TPL. As to expression, preferentially expressed in stems, leaves and flowers.

It is found in the nucleus. Functionally, aux/IAA proteins are short-lived transcriptional factors that function as repressors of early auxin response genes at low auxin concentrations. Repression is thought to result from the interaction with auxin response factors (ARFs), proteins that bind to the auxin-responsive promoter element (AuxRE). Formation of heterodimers with ARF proteins may alter their ability to modulate early auxin response genes expression. The protein is Auxin-responsive protein IAA4 (IAA4) of Arabidopsis thaliana (Mouse-ear cress).